Here is a 504-residue protein sequence, read N- to C-terminus: Arabinose import ATP-binding protein AraG (504 aa).

2 ABC transporter domains span residues 8-243 and 256-499; these read LSFR…MVGR and YGEE…MPKV. 40-47 is a binding site for ATP; the sequence is GENGAGKS.

This sequence belongs to the ABC transporter superfamily. Arabinose importer (TC 3.A.1.2.2) family. As to quaternary structure, the complex is composed of two ATP-binding proteins (AraG), two transmembrane proteins (AraH) and a solute-binding protein (AraF).

The protein localises to the cell inner membrane. The enzyme catalyses L-arabinose(out) + ATP + H2O = L-arabinose(in) + ADP + phosphate + H(+). Its function is as follows. Part of the ABC transporter complex AraFGH involved in arabinose import. Responsible for energy coupling to the transport system. The chain is Arabinose import ATP-binding protein AraG from Escherichia coli (strain UTI89 / UPEC).